A 354-amino-acid chain; its full sequence is Fructose-bisphosphate aldolase (354 aa).

S50 is a binding site for D-glyceraldehyde 3-phosphate. Catalysis depends on D83, which acts as the Proton donor. H84, D105, E142, and H198 together coordinate Zn(2+). Residue G199 participates in dihydroxyacetone phosphate binding. Residue H232 participates in Zn(2+) binding. Dihydroxyacetone phosphate contacts are provided by residues 233 to 235 (GSS) and 275 to 278 (NIDT).

It belongs to the class II fructose-bisphosphate aldolase family. Homodimer. Requires Zn(2+) as cofactor.

The enzyme catalyses beta-D-fructose 1,6-bisphosphate = D-glyceraldehyde 3-phosphate + dihydroxyacetone phosphate. It participates in carbohydrate biosynthesis; Calvin cycle. Its pathway is carbohydrate degradation; glycolysis; D-glyceraldehyde 3-phosphate and glycerone phosphate from D-glucose: step 4/4. With respect to regulation, activity is stimulated by Fe(2+) in autotrophically grown cells. Its function is as follows. Catalyzes the aldol condensation of dihydroxyacetone phosphate (DHAP or glycerone-phosphate) with glyceraldehyde 3-phosphate (G3P) to form fructose 1,6-bisphosphate (FBP) in gluconeogenesis and the reverse reaction in glycolysis. The sequence is that of Fructose-bisphosphate aldolase from Xanthobacter flavus.